The primary structure comprises 131 residues: Riboflavin kinase (131 aa).

Gly11–Gly16 is a CDP binding site. Residues Thr40 and Asn42 each contribute to the Mg(2+) site. FMN contacts are provided by Thr98 and Glu106. Position 111–114 (Glu111–Arg114) interacts with CDP.

It belongs to the archaeal riboflavin kinase family. Mg(2+) is required as a cofactor.

The catalysed reaction is riboflavin + CTP = CDP + FMN + H(+). The protein operates within cofactor biosynthesis; FMN biosynthesis; FMN from riboflavin (CTP route): step 1/1. Functionally, catalyzes the CTP-dependent phosphorylation of riboflavin (vitamin B2) to form flavin mononucleotide (FMN). This Methanosphaera stadtmanae (strain ATCC 43021 / DSM 3091 / JCM 11832 / MCB-3) protein is Riboflavin kinase.